The following is a 502-amino-acid chain: Maturase K (502 aa).

Belongs to the intron maturase 2 family. MatK subfamily.

Its subcellular location is the plastid. It localises to the chloroplast. Its function is as follows. Usually encoded in the trnK tRNA gene intron. Probably assists in splicing its own and other chloroplast group II introns. This is Maturase K from Vaccinium vitis-idaea (Mountain cranberry).